Reading from the N-terminus, the 214-residue chain is Small ribosomal subunit protein uS5 (214 aa).

The region spanning 54–117 is the S5 DRBM domain; it reads LKYEVVDIKV…RDAKMNIIPV (64 aa).

It belongs to the universal ribosomal protein uS5 family. In terms of assembly, part of the 30S ribosomal subunit. Contacts protein S4.

In terms of biological role, with S4 and S12 plays an important role in translational accuracy. The polypeptide is Small ribosomal subunit protein uS5 (Saccharolobus solfataricus (strain ATCC 35092 / DSM 1617 / JCM 11322 / P2) (Sulfolobus solfataricus)).